We begin with the raw amino-acid sequence, 490 residues long: UDP-N-acetylmuramoyl-L-alanyl-D-glutamate--2,6-diaminopimelate ligase (490 aa).

S31 contributes to the UDP-N-acetyl-alpha-D-muramoyl-L-alanyl-D-glutamate binding site. G109–S115 contributes to the ATP binding site. Residues N150, T151–T152, S178, and R186 contribute to the UDP-N-acetyl-alpha-D-muramoyl-L-alanyl-D-glutamate site. K218 carries the post-translational modification N6-carboxylysine. Meso-2,6-diaminopimelate contacts are provided by residues R384, D408 to R411, G458, and E462. Residues D408–R411 carry the Meso-diaminopimelate recognition motif motif.

This sequence belongs to the MurCDEF family. MurE subfamily. Requires Mg(2+) as cofactor. Post-translationally, carboxylation is probably crucial for Mg(2+) binding and, consequently, for the gamma-phosphate positioning of ATP.

It is found in the cytoplasm. The enzyme catalyses UDP-N-acetyl-alpha-D-muramoyl-L-alanyl-D-glutamate + meso-2,6-diaminopimelate + ATP = UDP-N-acetyl-alpha-D-muramoyl-L-alanyl-gamma-D-glutamyl-meso-2,6-diaminopimelate + ADP + phosphate + H(+). It participates in cell wall biogenesis; peptidoglycan biosynthesis. Catalyzes the addition of meso-diaminopimelic acid to the nucleotide precursor UDP-N-acetylmuramoyl-L-alanyl-D-glutamate (UMAG) in the biosynthesis of bacterial cell-wall peptidoglycan. This is UDP-N-acetylmuramoyl-L-alanyl-D-glutamate--2,6-diaminopimelate ligase from Bacillus velezensis (strain DSM 23117 / BGSC 10A6 / LMG 26770 / FZB42) (Bacillus amyloliquefaciens subsp. plantarum).